Consider the following 222-residue polypeptide: Uracil-DNA glycosylase (222 aa).

The active-site Proton acceptor is D61.

The protein belongs to the uracil-DNA glycosylase (UDG) superfamily. UNG family.

The protein localises to the cytoplasm. It carries out the reaction Hydrolyzes single-stranded DNA or mismatched double-stranded DNA and polynucleotides, releasing free uracil.. Excises uracil residues from the DNA which can arise as a result of misincorporation of dUMP residues by DNA polymerase or due to deamination of cytosine. In Aeromonas salmonicida (strain A449), this protein is Uracil-DNA glycosylase.